The sequence spans 332 residues: Sphingolipid delta(4)-desaturase DES1-like (332 aa).

3 helical membrane passes run Pro-55–Leu-75, Ile-83–His-103, and Cys-119–Tyr-139. A Histidine box-1 motif is present at residues His-103–His-107. Residues His-140–His-144 carry the Histidine box-2 motif. 3 helical membrane-spanning segments follow: residues Leu-164 to Leu-184, Trp-197 to Gly-217, and Ala-222 to Ile-242. A Histidine box-3 motif is present at residues His-271–His-275.

This sequence belongs to the fatty acid desaturase type 1 family. DEGS subfamily. Specifically expressed in flowers.

The protein resides in the endoplasmic reticulum membrane. It carries out the reaction an N-acylsphinganine + 2 Fe(II)-[cytochrome b5] + O2 + 2 H(+) = an N-acylsphing-4-enine + 2 Fe(III)-[cytochrome b5] + 2 H2O. Sphingolipid-delta-4-desaturase required for the biosynthesis of delta-4-unsaturated sphingolipids and derivatives. May be required for the biosynthesis of glucosylceramides. The chain is Sphingolipid delta(4)-desaturase DES1-like from Arabidopsis thaliana (Mouse-ear cress).